The following is a 467-amino-acid chain: Syntaxin-5 (467 aa).

2 disordered regions span residues 1-53 (MQTR…QSLV) and 58-77 (GHEAAIHIGDNYQSGDSIST). Residues 1-445 (MQTRRRLHQT…KYFQSVSKNR (445 aa)) are Cytoplasmic-facing. The span at 10–22 (TDQQDYSSSSTYT) shows a compositional bias: low complexity. Positions 29 to 45 (GGAGAGSVGTGTAGGSV) are enriched in gly residues. Residues 68–77 (NYQSGDSIST) show a composition bias toward polar residues. The stretch at 245 to 269 (IKGDLNALNQQIARLQDISKDQRRH) forms a coiled coil. Residues 310 to 335 (QQKTRRDQFSQGPGPLAAHTVSPSTA) are disordered. A t-SNARE coiled-coil homology domain is found at 375-437 (DNYVQQRAET…EAAHGEILKY (63 aa)). Residues 446-466 (WLMIKIFGVLIFFFLFFVVFM) traverse the membrane as a helical; Anchor for type IV membrane protein segment. Position 467 (S467) is a topological domain, vesicular.

Belongs to the syntaxin family. Homodimer.

Its subcellular location is the golgi apparatus. The protein localises to the cis-Golgi network membrane. Functionally, mediates endoplasmic reticulum to Golgi transport. The chain is Syntaxin-5 from Drosophila melanogaster (Fruit fly).